A 93-amino-acid chain; its full sequence is Transcription factor PRE3 (93 aa).

Residues 6–61 (SRSRQSSGTSRISEDQINDLIIKLQQLLPELRDSRRSDKVSAARVLQDTCNYIRNL) enclose the bHLH domain.

In terms of assembly, homodimer. Interacts with BHLH 147, BHLH148, BHLH149, BHLH150 and IBH1. Interacts with SIEL. Expressed in root and shoot meristems, and young siliques. Low levels detected in all aerial tissues.

Its subcellular location is the nucleus. The protein resides in the cytoplasm. In terms of biological role, atypical and probable non DNA-binding bHLH transcription factor required for MONOPTEROS-dependent root initiation in embryo. Promotes the correct definition of the hypophysis cell division plane. Transcriptionally controlled by MONOPTEROS. Moves from its site of synthesis in pro-embryos cells into the hypophysis. Regulates brassinosteroid (BR) signaling by sequestering negative BR signaling components. May function as positive regulator of gibberellin signaling. May play a role in the regulation of light signaling and possibly auxin signaling. The chain is Transcription factor PRE3 (PRE3) from Arabidopsis thaliana (Mouse-ear cress).